The chain runs to 616 residues: Schwannomin-interacting protein 1 homolog (616 aa).

Acidic residues predominate over residues 38–50; it reads ESDLTDSDREDDP. 3 disordered regions span residues 38–71, 204–251, and 292–320; these read ESDLTDSDREDDPTFPSKMAKESGSETFKNGQDS, LKQT…PDTF, and SSLEIGGSGSQQNLDEDNNKVASRKYSNQ. Polar residues-rich tracts occupy residues 62 to 71 and 204 to 217; these read SETFKNGQDS and LKQTSSTRLSGNST. Positions 550–594 form a coiled coil; that stretch reads LQLLVNNLQEYIENLNVTLLESLKERDDLNSDQDDILHDLEKINN.

It belongs to the SCHIP1 family. Interacts with ex; the interaction results in recruitment of Schip1 to the apical cell membrane. Interacts with Tao; the interaction enhances Tao kinase activity. Interacts with Mer. In eye disks of the third instar larvae, expressed in all cells (at protein level).

It localises to the cell junction. It is found in the adherens junction. The protein localises to the apical cell membrane. Functionally, regulator of the Hippo/SWH (Sav/Wts/Hpo) signaling pathway, a signaling pathway that plays a pivotal role in organ size control and tumor suppression by restricting proliferation and promoting apoptosis. The core of this pathway is composed of a kinase cascade wherein Hippo (hpo), in complex with its regulatory protein Salvador (sav), phosphorylates and activates Warts (wts) in complex with its regulatory protein Mats, which in turn phosphorylates and inactivates the Yorkie (yki) oncoprotein. Schip1 promotes kinase activity of Tao and enhances phosphorylation of hpo by Tao. This is Schwannomin-interacting protein 1 homolog from Drosophila melanogaster (Fruit fly).